We begin with the raw amino-acid sequence, 179 residues long: Large ribosomal subunit protein uL5 (179 aa).

It belongs to the universal ribosomal protein uL5 family. As to quaternary structure, part of the 50S ribosomal subunit; part of the 5S rRNA/L5/L18/L25 subcomplex. Contacts the 5S rRNA and the P site tRNA. Forms a bridge to the 30S subunit in the 70S ribosome.

Functionally, this is one of the proteins that bind and probably mediate the attachment of the 5S RNA into the large ribosomal subunit, where it forms part of the central protuberance. In the 70S ribosome it contacts protein S13 of the 30S subunit (bridge B1b), connecting the 2 subunits; this bridge is implicated in subunit movement. Contacts the P site tRNA; the 5S rRNA and some of its associated proteins might help stabilize positioning of ribosome-bound tRNAs. This Alcanivorax borkumensis (strain ATCC 700651 / DSM 11573 / NCIMB 13689 / SK2) protein is Large ribosomal subunit protein uL5.